A 350-amino-acid chain; its full sequence is MLGSVKMEAHDLAEWSYYPEAGEVYSPVTPVPTMAPLNSYMTLNPLSSPYPPGGLPASPLPSGPLAPPAPAAPLGPTFPGLGVSGGSSSSGYGAPGPGLVHGKEMPKGYRRPLAHAKPPYSYISLITMAIQQAPGKMLTLSEIYQWIMDLFPYYRENQQRWQNSIRHSLSFNDCFVKVARSPDKPGKGSYWALHPSSGNMFENGCYLRRQKRFKLEEKVKKGGSGAATTTRNGTGSAASTTTPAATVTSPPQPPPPAPEPEAQGGEDVGALDCGSPASSTPYFTGLELPGELKLDAPYNFNHPFSINNLMSEQTPAPPKLDVGFGGYGAEGGEPGVYYQGLYSRSLLNAS.

The segment at residues 116–207 (AKPPYSYISL…GNMFENGCYL (92 aa)) is a DNA-binding region (fork-head). The segment at 217–276 (EKVKKGGSGAATTTRNGTGSAASTTTPAATVTSPPQPPPPAPEPEAQGGEDVGALDCGSP) is disordered. Residues 226–249 (AATTTRNGTGSAASTTTPAATVTS) are compositionally biased toward low complexity. Residues 250–259 (PPQPPPPAPE) are compositionally biased toward pro residues.

As to quaternary structure, interacts with FOXA2. As to expression, expressed in erythroleukemia and hepatoma cell lines and in liver and pancreas. Not expressed in any other cell lines or tissues examined.

It localises to the nucleus. In terms of biological role, transcription factor that is thought to act as a 'pioneer' factor opening the compacted chromatin for other proteins through interactions with nucleosomal core histones and thereby replacing linker histones at target enhancer and/or promoter sites. Originally described as a transcription activator for a number of liver genes such as AFP, albumin, tyrosine aminotransferase, PEPCK, etc. Interacts with the cis-acting regulatory regions of these genes. Involved in glucose homeostasis; binds to and activates transcription from the G6PC1 promoter. Binds to the CYP3A4 promoter and activates its transcription in cooperation with CEBPA. Binds to the CYP3A7 promoter together with members of the CTF/NF-I family. Involved in regulation of neuronal-specific transcription. May be involved in regulation of spermatogenesis. This is Hepatocyte nuclear factor 3-gamma (FOXA3) from Homo sapiens (Human).